Here is a 1572-residue protein sequence, read N- to C-terminus: Multiple epidermal growth factor-like domains protein 6 (1572 aa).

A signal peptide spans 1–26; sequence MPVGVEARASWRVVALTLLLLPAVPA. One can recognise an EMI domain in the interval 40 to 121; it reads MPHVCAEQKL…QKPGQEGCLS (82 aa). 36 disulfide bridges follow: Cys44–Cys107, Cys73–Cys79, Cys106–Cys119, Cys126–Cys137, Cys133–Cys146, Cys148–Cys161, Cys167–Cys178, Cys174–Cys187, Cys189–Cys202, Cys291–Cys302, Cys298–Cys311, Cys313–Cys326, Cys418–Cys429, Cys425–Cys438, Cys440–Cys453, Cys522–Cys535, Cys529–Cys542, Cys544–Cys553, Cys566–Cys578, Cys572–Cys585, Cys587–Cys596, Cys609–Cys621, Cys615–Cys628, Cys630–Cys639, Cys788–Cys797, Cys791–Cys804, Cys806–Cys815, Cys832–Cys840, Cys834–Cys847, Cys849–Cys858, Cys871–Cys884, Cys875–Cys891, Cys893–Cys902, Cys915–Cys927, Cys921–Cys934, and Cys936–Cys945. The EGF-like 1; calcium-binding domain maps to 122–162; that stretch reads DVDECANANGGCEGPCCNTVGGFYCRCPPGYQLQGDGKTCQ. Residues 163–203 form the EGF-like 2; calcium-binding domain; that stretch reads DVDECRSHNGGCQHRCVNTPGSYLCECKPGFRLHTDGRTCL. Positions 287–327 constitute an EGF-like 3; calcium-binding domain; that stretch reads DVDECALGLAQCAHGCLNTQGSFKCVCHAGYELGADGRQCY. In terms of domain architecture, EGF-like 4; calcium-binding spans 414 to 454; the sequence is DVDECASGHSGCEHHCSNLAGSFQCFCEAGYRLDEDRRGCT. 17 EGF-like domains span residues 518–554, 562–597, 605–640, 785–816, 829–859, 867–903, 911–946, 997–1032, 1040–1075, 1083–1118, 1131–1161, 1169–1204, 1256–1291, 1299–1334, 1342–1377, 1390–1420, and 1428–1463; these read FGHDCSLTCDDCRNGGTCFPGLDGCDCPEGWTGIICN, FGKNCSSPCICQNGGTCDPVSGACRCPPGVSGAHCE, YGKHCRKKCHCANRGRCHRLYGACLCDPGLYGRFCH, QEICPACEHGASCDPETGTCLCLPGFVGSRCQ, QMRCACANDGHCHPATGRCSCAPGWTGLSCQ, WGPDCIHPCNCSAGHGNCDAVSGLCLCEAGYEGPQCE, FGPGCEQKCRCEHGATCDHVSGACTCPAGWRGSFCE, FGLNCSQICTCFNGASCDPVLGQCHCAPGWMGPTCL, YGKNCQHSCLCRNGGSCDPILGQCTCPEGWTGLACE, HGAGCRLNCSCLNGGTCDRLTGHCRCPAGWTGDKCQ, EEHCACRKGATCHHVTGACLCPPGWRGSHCE, FGEACAQRCHCPPGASCHHVSGECHCPPGFTGPGCE, YGPGCEQICKCLNGGTCDPATGACYCPAGFLGADCS, FGPSCAHVCTCGQGAACDPVSGTCICPPGKTGGHCE, FGKGCEHKCACRNGGLCHATNGSCSCPLGWMGPHCE, LLECSCQNNGSCEPTSGACLCGPGFYGQACE, and HGSGCQRVCECQQGAPCDPVSGRCLCPAGFRGQFCE. Asn1000 carries N-linked (GlcNAc...) asparagine glycosylation. Intrachain disulfides connect Cys1001–Cys1013, Cys1007–Cys1020, Cys1022–Cys1031, Cys1044–Cys1056, Cys1050–Cys1063, Cys1065–Cys1074, Cys1087–Cys1099, Cys1093–Cys1106, Cys1108–Cys1117, Cys1134–Cys1142, Cys1136–Cys1149, Cys1151–Cys1160, Cys1173–Cys1185, Cys1177–Cys1192, Cys1194–Cys1203, Cys1260–Cys1272, Cys1266–Cys1279, Cys1281–Cys1290, Cys1303–Cys1315, Cys1309–Cys1322, Cys1324–Cys1333, Cys1346–Cys1358, Cys1352–Cys1365, Cys1367–Cys1376, Cys1393–Cys1401, Cys1395–Cys1408, Cys1410–Cys1419, Cys1432–Cys1444, Cys1438–Cys1451, and Cys1453–Cys1462.

It is found in the secreted. The polypeptide is Multiple epidermal growth factor-like domains protein 6 (Megf6) (Mus musculus (Mouse)).